Reading from the N-terminus, the 127-residue chain is DNA-directed RNA polymerase subunit omega (127 aa).

It belongs to the RNA polymerase subunit omega family. The RNAP catalytic core consists of 2 alpha, 1 beta, 1 beta' and 1 omega subunit. When a sigma factor is associated with the core the holoenzyme is formed, which can initiate transcription.

The catalysed reaction is RNA(n) + a ribonucleoside 5'-triphosphate = RNA(n+1) + diphosphate. Functionally, promotes RNA polymerase assembly. Latches the N- and C-terminal regions of the beta' subunit thereby facilitating its interaction with the beta and alpha subunits. The protein is DNA-directed RNA polymerase subunit omega of Rickettsia rickettsii (strain Iowa).